Reading from the N-terminus, the 346-residue chain is tRNA (guanine-N(7)-)-methyltransferase (346 aa).

S-adenosyl-L-methionine contacts are provided by residues Gly101 and 124–125 (EI). The tract at residues 149 to 191 (LKSAGGGGSDAAPESPAAPPTPSEAASPDSTTPSEQQAPTTLV) is disordered. Residues 171 to 182 (SEAASPDSTTPS) are compositionally biased toward low complexity. Residues 204 to 205 (NT) and Cys224 each bind S-adenosyl-L-methionine. The active site involves Asp227. Residue 318 to 320 (TEE) coordinates S-adenosyl-L-methionine.

Belongs to the class I-like SAM-binding methyltransferase superfamily. TrmB family. In terms of assembly, forms a complex with trm82.

It localises to the nucleus. It carries out the reaction guanosine(46) in tRNA + S-adenosyl-L-methionine = N(7)-methylguanosine(46) in tRNA + S-adenosyl-L-homocysteine. Its pathway is tRNA modification; N(7)-methylguanine-tRNA biosynthesis. In terms of biological role, catalyzes the formation of N(7)-methylguanine at position 46 (m7G46) in tRNA. In Aspergillus terreus (strain NIH 2624 / FGSC A1156), this protein is tRNA (guanine-N(7)-)-methyltransferase (trm8).